The chain runs to 154 residues: Myoglobin (154 aa).

The 147-residue stretch at 2 to 148 folds into the Globin domain; sequence GLSDQEWQQV…FRNDMASKYK (147 aa). His-65 provides a ligand contact to nitrite. His-65 provides a ligand contact to O2. His-94 lines the heme b pocket.

The protein belongs to the globin family. Monomeric.

Its subcellular location is the cytoplasm. The protein localises to the sarcoplasm. The catalysed reaction is Fe(III)-heme b-[protein] + nitric oxide + H2O = Fe(II)-heme b-[protein] + nitrite + 2 H(+). It carries out the reaction H2O2 + AH2 = A + 2 H2O. Its function is as follows. Monomeric heme protein which primary function is to store oxygen and facilitate its diffusion within muscle tissues. Reversibly binds oxygen through a pentacoordinated heme iron and enables its timely and efficient release as needed during periods of heightened demand. Depending on the oxidative conditions of tissues and cells, and in addition to its ability to bind oxygen, it also has a nitrite reductase activity whereby it regulates the production of bioactive nitric oxide. Under stress conditions, like hypoxia and anoxia, it also protects cells against reactive oxygen species thanks to its pseudoperoxidase activity. The chain is Myoglobin (MB) from Cerorhinca monocerata (Rhinoceros auklet).